Reading from the N-terminus, the 266-residue chain is Ribonuclease HII (266 aa).

Residues 19–38 form a disordered region; that stretch reads HPGMIRDKEKPAPTKPGKGV. Residues 58–246 enclose the RNase H type-2 domain; that stretch reads WPVAGCDEAG…VVAARQKHQP (189 aa). Residues D64, E65, and D155 each coordinate a divalent metal cation.

This sequence belongs to the RNase HII family. It depends on Mn(2+) as a cofactor. Requires Mg(2+) as cofactor.

It is found in the cytoplasm. It carries out the reaction Endonucleolytic cleavage to 5'-phosphomonoester.. Functionally, endonuclease that specifically degrades the RNA of RNA-DNA hybrids. The sequence is that of Ribonuclease HII from Rhodopseudomonas palustris (strain BisB18).